The primary structure comprises 169 residues: UPF0316 protein Dde_2502 (169 aa).

Transmembrane regions (helical) follow at residues 1-21 (MITAASLLTALAVFIARLCDV), 38-58 (LAFSVAFFEAVIWVYAVSRVI), and 68-88 (LAFALGFASGTYAGITLEGVF).

It belongs to the UPF0316 family.

The protein resides in the cell membrane. This chain is UPF0316 protein Dde_2502, found in Oleidesulfovibrio alaskensis (strain ATCC BAA-1058 / DSM 17464 / G20) (Desulfovibrio alaskensis).